The primary structure comprises 204 residues: MLYIISAPSGTGKSSLLQALLRTKRLPLHEIRISISHTTRAMRPGEINGQHYYFISVEEFEKLIDQDAFLEYARVFNHYYGTLRQEVDSILINSVDILLDIDWQGAKQIYAIRKDVRSIFIIPPSKDELHRRLHKRGQDQEEVINQRISQAVAEMIHYTEYDYLIINDDFHTALSDLNTIICAEQLHMNNQKIRYKTLISRLLQ.

The Guanylate kinase-like domain maps to 1–182; it reads MLYIISAPSG…ALSDLNTIIC (182 aa). Residue 7–14 participates in ATP binding; sequence APSGTGKS.

This sequence belongs to the guanylate kinase family.

It localises to the cytoplasm. It catalyses the reaction GMP + ATP = GDP + ADP. Functionally, essential for recycling GMP and indirectly, cGMP. The chain is Guanylate kinase from Baumannia cicadellinicola subsp. Homalodisca coagulata.